The sequence spans 138 residues: Large ribosomal subunit protein uL16c (138 aa).

It belongs to the universal ribosomal protein uL16 family. In terms of assembly, part of the 50S ribosomal subunit.

It is found in the plastid. Its subcellular location is the chloroplast. In Chaetosphaeridium globosum (Charophycean green alga), this protein is Large ribosomal subunit protein uL16c.